Consider the following 321-residue polypeptide: uncharacterized protein (321 aa).

9 helical membrane-spanning segments follow: residues 12–32 (IGVEFIIFSVYAVFSISWAAT), 52–72 (LITSMIVVAKIFGASFTAFLV), 86–106 (ILMSSGIFLSFVDSYSGILII), 109–129 (LTGLGSACALVCLVPIAQQWF), 136–156 (FVISFNITSNLVGITLGLVLA), 168–188 (DSLSFYAWINLILLILWLFVG), 214–234 (WGMIIFYIGPILFLNSLFTFL), 254–274 (KEIPALANFAIIFGPYLGLFF), and 292–312 (IFICGFCMLFLQNLVLIQIFA).

It localises to the cell membrane. This is an uncharacterized protein from Campylobacter jejuni subsp. jejuni serotype O:2 (strain ATCC 700819 / NCTC 11168).